The chain runs to 501 residues: uncharacterized protein (501 aa).

The region spanning 14–237 is the BAR domain; sequence EKFGFDRQKT…GFSKKRDNVN (224 aa). A Phosphothreonine modification is found at Thr-285. 2 disordered regions span residues 302–321 and 329–414; these read IASS…DVSD and SAVD…RSYS. Basic and acidic residues predominate over residues 309 to 320; sequence QHTEDNYNKDVS. Polar residues predominate over residues 390 to 402; sequence SQCNVSPSPSNIS. Ser-414 bears the Phosphoserine mark. Residues 421–487 enclose the SH3 domain; the sequence is SSRKVVRMKY…PSNYCVPAHP (67 aa).

It localises to the cytoplasm. This is an uncharacterized protein from Schizosaccharomyces pombe (strain 972 / ATCC 24843) (Fission yeast).